Reading from the N-terminus, the 96-residue chain is Aspartyl/glutamyl-tRNA(Asn/Gln) amidotransferase subunit C (96 aa).

This sequence belongs to the GatC family. Heterotrimer of A, B and C subunits.

It catalyses the reaction L-glutamyl-tRNA(Gln) + L-glutamine + ATP + H2O = L-glutaminyl-tRNA(Gln) + L-glutamate + ADP + phosphate + H(+). It carries out the reaction L-aspartyl-tRNA(Asn) + L-glutamine + ATP + H2O = L-asparaginyl-tRNA(Asn) + L-glutamate + ADP + phosphate + 2 H(+). Allows the formation of correctly charged Asn-tRNA(Asn) or Gln-tRNA(Gln) through the transamidation of misacylated Asp-tRNA(Asn) or Glu-tRNA(Gln) in organisms which lack either or both of asparaginyl-tRNA or glutaminyl-tRNA synthetases. The reaction takes place in the presence of glutamine and ATP through an activated phospho-Asp-tRNA(Asn) or phospho-Glu-tRNA(Gln). This chain is Aspartyl/glutamyl-tRNA(Asn/Gln) amidotransferase subunit C, found in Bacillus cytotoxicus (strain DSM 22905 / CIP 110041 / 391-98 / NVH 391-98).